Here is a 364-residue protein sequence, read N- to C-terminus: MLTFPLINDTSRKIIHIDMDAFFASVEVRDNPSLKGKPVVIARNPLQTGGRGVVSTCSYEARAFGIHSAMSAKEAYDLCPQAIFISGNYEKYTKVSKQVREIFKRYTDNIEAASIDEAYLDVTENKIGAQSAIKIAKLIQHDIFVELGLTCSAGVSYNKFLAKIASDYEKPHGLTLIMPDEALEFLAKLPVEKFHGVGKATVPKLHALGFFTGGDLQKADPVDLAERFGIYGWELFQKANGIHNSKVKNHRERKSVGKERTYGKLLYLPDDIKAELIKISKQVSESLKRHQLKGNIIILKLRYSDFTTLTKRKSMVENLDSPEDIAEAARQIFEEIDYDESLGVRLLGVTVSGFGVQKATLDMQ.

The region spanning 14–198 is the UmuC domain; that stretch reads IIHIDMDAFF…LPVEKFHGVG (185 aa). Residues Asp18 and Asp116 each coordinate Mg(2+). Residue Glu117 is part of the active site.

The protein belongs to the DNA polymerase type-Y family. As to quaternary structure, monomer. The cofactor is Mg(2+).

The protein resides in the cytoplasm. The catalysed reaction is DNA(n) + a 2'-deoxyribonucleoside 5'-triphosphate = DNA(n+1) + diphosphate. Functionally, poorly processive, error-prone DNA polymerase involved in untargeted mutagenesis. Copies undamaged DNA at stalled replication forks, which arise in vivo from mismatched or misaligned primer ends. These misaligned primers can be extended by PolIV. Exhibits no 3'-5' exonuclease (proofreading) activity. May be involved in translesional synthesis, in conjunction with the beta clamp from PolIII. The chain is DNA polymerase IV from Lactococcus lactis subsp. cremoris (strain MG1363).